Reading from the N-terminus, the 429-residue chain is UPF0597 protein GSU1527 (429 aa).

This sequence belongs to the UPF0597 family.

In Geobacter sulfurreducens (strain ATCC 51573 / DSM 12127 / PCA), this protein is UPF0597 protein GSU1527.